The sequence spans 161 residues: Small ribosomal subunit protein uS9 (161 aa).

Over residues 1–21 (MATLQSLADLNRANTQTSNPE) the composition is skewed to polar residues. The segment at 1–25 (MATLQSLADLNRANTQTSNPENEAP) is disordered.

Belongs to the universal ribosomal protein uS9 family.

The chain is Small ribosomal subunit protein uS9 from Methylorubrum populi (strain ATCC BAA-705 / NCIMB 13946 / BJ001) (Methylobacterium populi).